The chain runs to 112 residues: Ribosomal processing cysteine protease Prp (112 aa).

The active-site Proton donor is histidine 22. Residue cysteine 34 is the Nucleophile of the active site.

The protein belongs to the Prp family. Homodimer.

An essential cysteine protease that cleaves the N-terminus from ribosomal protein bL27. The chain is Ribosomal processing cysteine protease Prp from Bacillus subtilis (strain 168).